Here is a 160-residue protein sequence, read N- to C-terminus: Cytochrome b6-f complex subunit 4 (160 aa).

3 consecutive transmembrane segments (helical) span residues 36 to 56, 95 to 115, and 131 to 151; these read LLYM…GLAV, LLGV…PFIE, and TVFL…TLPI.

The protein belongs to the cytochrome b family. PetD subfamily. The 4 large subunits of the cytochrome b6-f complex are cytochrome b6, subunit IV (17 kDa polypeptide, petD), cytochrome f and the Rieske protein, while the 4 small subunits are petG, petL, petM and petN. The complex functions as a dimer.

It localises to the plastid. It is found in the chloroplast thylakoid membrane. Component of the cytochrome b6-f complex, which mediates electron transfer between photosystem II (PSII) and photosystem I (PSI), cyclic electron flow around PSI, and state transitions. In Nephroselmis olivacea (Green alga), this protein is Cytochrome b6-f complex subunit 4.